A 316-amino-acid chain; its full sequence is L-lactate dehydrogenase 3 (316 aa).

4 residues coordinate NAD(+): V16, D37, R42, and Y68. R91 is a binding site for substrate. Residues S104, 121–123 (ASN), and T146 each bind NAD(+). Residue 123 to 126 (NPVD) participates in substrate binding. Residue 151 to 154 (DSSR) coordinates substrate. Residues R156 and H171 each coordinate beta-D-fructose 1,6-bisphosphate. The active-site Proton acceptor is the H178. T233 is a substrate binding site.

It belongs to the LDH/MDH superfamily. LDH family. As to quaternary structure, homotetramer.

Its subcellular location is the cytoplasm. The catalysed reaction is (S)-lactate + NAD(+) = pyruvate + NADH + H(+). Its pathway is fermentation; pyruvate fermentation to lactate; (S)-lactate from pyruvate: step 1/1. Its activity is regulated as follows. Allosterically activated by fructose 1,6-bisphosphate (FBP). Catalyzes the conversion of lactate to pyruvate. The sequence is that of L-lactate dehydrogenase 3 from Bacillus cereus (strain ATCC 10987 / NRS 248).